The primary structure comprises 255 residues: tRNA (guanine-N(1)-)-methyltransferase (255 aa).

S-adenosyl-L-methionine is bound by residues Gly-113 and 133–138 (IGDYVL).

The protein belongs to the RNA methyltransferase TrmD family. Homodimer.

The protein resides in the cytoplasm. It catalyses the reaction guanosine(37) in tRNA + S-adenosyl-L-methionine = N(1)-methylguanosine(37) in tRNA + S-adenosyl-L-homocysteine + H(+). Specifically methylates guanosine-37 in various tRNAs. The sequence is that of tRNA (guanine-N(1)-)-methyltransferase from Escherichia coli O127:H6 (strain E2348/69 / EPEC).